The following is a 346-amino-acid chain: Nitrilase 3 (346 aa).

At serine 2 the chain carries N-acetylserine. One can recognise a CN hydrolase domain in the interval 25–297 (VRVTIVQSST…EGLVTADLDL (273 aa)). The active-site Proton acceptor is the glutamate 65. Lysine 152 functions as the Proton donor in the catalytic mechanism. The Nucleophile role is filled by cysteine 186.

The protein belongs to the carbon-nitrogen hydrolase superfamily. Nitrilase family.

It localises to the cell membrane. The catalysed reaction is a nitrile + 2 H2O = a carboxylate + NH4(+). In terms of biological role, can convert indole-3-acetonitrile to the plant hormone indole-3-acetic acid. The sequence is that of Nitrilase 3 (NIT3) from Arabidopsis thaliana (Mouse-ear cress).